The chain runs to 179 residues: ATP synthase subunit delta (179 aa).

The protein belongs to the ATPase delta chain family. As to quaternary structure, F-type ATPases have 2 components, F(1) - the catalytic core - and F(0) - the membrane proton channel. F(1) has five subunits: alpha(3), beta(3), gamma(1), delta(1), epsilon(1). F(0) has three main subunits: a(1), b(2) and c(10-14). The alpha and beta chains form an alternating ring which encloses part of the gamma chain. F(1) is attached to F(0) by a central stalk formed by the gamma and epsilon chains, while a peripheral stalk is formed by the delta and b chains.

The protein resides in the cell membrane. Its function is as follows. F(1)F(0) ATP synthase produces ATP from ADP in the presence of a proton or sodium gradient. F-type ATPases consist of two structural domains, F(1) containing the extramembraneous catalytic core and F(0) containing the membrane proton channel, linked together by a central stalk and a peripheral stalk. During catalysis, ATP synthesis in the catalytic domain of F(1) is coupled via a rotary mechanism of the central stalk subunits to proton translocation. This protein is part of the stalk that links CF(0) to CF(1). It either transmits conformational changes from CF(0) to CF(1) or is implicated in proton conduction. This chain is ATP synthase subunit delta, found in Clostridium botulinum (strain 657 / Type Ba4).